The following is a 147-amino-acid chain: 3-dehydroquinate dehydratase (147 aa).

Tyr25 acts as the Proton acceptor in catalysis. Positions 76, 82, and 89 each coordinate substrate. His102 serves as the catalytic Proton donor. Substrate contacts are provided by residues 103-104 and Arg113; that span reads LS.

Belongs to the type-II 3-dehydroquinase family. Homododecamer.

It catalyses the reaction 3-dehydroquinate = 3-dehydroshikimate + H2O. It functions in the pathway metabolic intermediate biosynthesis; chorismate biosynthesis; chorismate from D-erythrose 4-phosphate and phosphoenolpyruvate: step 3/7. Catalyzes a trans-dehydration via an enolate intermediate. This Nostoc sp. (strain PCC 7120 / SAG 25.82 / UTEX 2576) protein is 3-dehydroquinate dehydratase.